Reading from the N-terminus, the 184-residue chain is Photosystem I assembly protein Ycf4 (184 aa).

A run of 2 helical transmembrane segments spans residues 19–39 (ISNF…LLVG) and 57–77 (IIFF…LFIS).

The protein belongs to the Ycf4 family.

Its subcellular location is the plastid. It is found in the chloroplast thylakoid membrane. Functionally, seems to be required for the assembly of the photosystem I complex. The sequence is that of Photosystem I assembly protein Ycf4 from Nicotiana sylvestris (Wood tobacco).